Consider the following 216-residue polypeptide: Inorganic pyrophosphatase (216 aa).

Residues Lys39, Arg53, and Tyr65 each coordinate substrate. Asp93, Asp98, and Asp131 together coordinate Mg(2+). Residue Tyr168 coordinates substrate.

It belongs to the PPase family. Homohexamer. It depends on Mg(2+) as a cofactor.

The protein resides in the cytoplasm. It carries out the reaction diphosphate + H2O = 2 phosphate + H(+). In terms of biological role, catalyzes the hydrolysis of inorganic pyrophosphate (PPi) forming two phosphate ions. The chain is Inorganic pyrophosphatase from Chlamydia caviae (strain ATCC VR-813 / DSM 19441 / 03DC25 / GPIC) (Chlamydophila caviae).